Consider the following 685-residue polypeptide: Probable inactive leucine-rich repeat receptor-like protein kinase At1g66830 (685 aa).

Positions 1–21 (MSQLFLILCFILTHFFAIATS) are cleaved as a signal peptide. The Extracellular segment spans residues 22–305 (LNDQGLALLS…RRANHHSRLC (284 aa)). Residues asparagine 38 and asparagine 48 are each glycosylated (N-linked (GlcNAc...) asparagine). LRR repeat units follow at residues 65-89 (DMRVVSIRLPNKRLSGSLDPSIGSL), 90-113 (LSLRHINLRDNDFQGKLPVELFGL), 115-136 (GLQSLVLSGNSFSGFVPEEIGS), 137-161 (LKSLMTLDLSENSFNGSISLSLIPC), 162-185 (KKLKTLVLSKNSFSGDLPTGLGSN), 186-210 (LVHLRTLNLSFNRLTGTIPEDVGSL), 212-234 (NLKGTLDLSHNFFSGMIPTSLGN), and 235-260 (LPELLYVDLSYNNLSGPIPKFNVLLN). Asparagine 151 carries an N-linked (GlcNAc...) asparagine glycan. Residue asparagine 193 is glycosylated (N-linked (GlcNAc...) asparagine). The N-linked (GlcNAc...) asparagine glycan is linked to asparagine 247. Residues 306-326 (IILTATGGTVAGIIFLASLFI) form a helical membrane-spanning segment. Residues 327–685 (YYLRKASARA…ESFEKLVTSI (359 aa)) are Cytoplasmic-facing. In terms of domain architecture, Protein kinase spans 397–682 (KASAFLLGKS…SVLESFEKLV (286 aa)). A phosphoserine mark is found at serine 399, serine 480, and serine 590.

Belongs to the protein kinase superfamily. Ser/Thr protein kinase family.

The protein resides in the cell membrane. This Arabidopsis thaliana (Mouse-ear cress) protein is Probable inactive leucine-rich repeat receptor-like protein kinase At1g66830.